Reading from the N-terminus, the 478-residue chain is ATP-dependent RNA helicase DDX19A (478 aa).

Ala2 bears the N-acetylalanine mark. Residues 2–299 (ATDSWALAVD…DPNIIKLKRE (298 aa)) form an N-terminal lobe region. Lys26 is covalently cross-linked (Glycyl lysine isopeptide (Lys-Gly) (interchain with G-Cter in SUMO1); alternate). Residue Lys26 forms a Glycyl lysine isopeptide (Lys-Gly) (interchain with G-Cter in SUMO2); alternate linkage. A disordered region spans residues 31 to 55 (KPDTNGVIKTNATPEKTDEEEKEDR). Residues 54 to 67 (DRAAQSLLNKLIRS) form an N-terminal helix region. Residues 91–119 (KSFEELRLKPQLLQGVYAMGFNRPSKIQE) carry the Q motif motif. Residues Gln118 and 137 to 144 (SQSGTGKT) each bind ATP. The Helicase ATP-binding domain maps to 124 to 294 (MMLAEPPQNL…QKVVPDPNII (171 aa)). Residues 241-244 (DEAD) carry the DEAD box motif. The tract at residues 300–478 (EETLDTIKQY…DLDEIEKIAN (179 aa)) is C-terminal lobe. The Helicase C-terminal domain occupies 305–473 (TIKQYYVLCN…RLDTDDLDEI (169 aa)). Residues Arg428 and Arg431 each contribute to the ATP site.

This sequence belongs to the DEAD box helicase family. DDX19/DBP5 subfamily.

The protein localises to the cytoplasm. It is found in the nucleus. The protein resides in the nucleoplasm. The enzyme catalyses ATP + H2O = ADP + phosphate + H(+). Its function is as follows. ATP-dependent RNA helicase involved in mRNA export from the nucleus. Rather than unwinding RNA duplexes, DDX19 functions as a remodeler of ribonucleoprotein particles, whereby proteins bound to nuclear mRNA are dissociated and replaced by cytoplasmic mRNA binding proteins. This is ATP-dependent RNA helicase DDX19A (DDX19A) from Bos taurus (Bovine).